Consider the following 157-residue polypeptide: Thioredoxin 2 (157 aa).

Residues 1 to 23 (MKKYIFFFLFSFINFFFVYDVTC) form the signal peptide. Residues 46–157 (LRMFKKVPRL…DLIALIKKHL (112 aa)) enclose the Thioredoxin domain. Catalysis depends on nucleophile residues cysteine 82 and cysteine 85. Cysteine 82 and cysteine 85 are disulfide-bonded.

The protein belongs to the thioredoxin family. As to quaternary structure, monomer. Component of the Plasmodium translocon of exported proteins (PTEX) complex composed of HSP101, EXP2, PTEX150, PTEX88 and TRX2. The disulfide bond between Cys-82 and Cys-85 acts as a redox-active center and is reduced by thioredoxin reductase TRXR.

The protein resides in the parasitophorous vacuole membrane. Participates in various redox reactions through the reversible oxidation of its active center dithiol to a disulfide and catalyzes dithiol-disulfide exchange reactions. As part of the translocon PTEX complex, plays a role in the export of parasite proteins into the host erythrocyte. The translocon PTEX complex is a multi-protein machinery resident in the parasite parasitophorous vacuolar membrane, responsible for protein secretion into host cells. May contribute to the unfolding of proteins containing the PEXEL localization motif before their passage through the translocon or regulate the PTEX complex function. The sequence is that of Thioredoxin 2 from Plasmodium falciparum (isolate 3D7).